The sequence spans 4678 residues: MMMCAATASPAAASSGLGGDGFYPAATFSSSPAPGALFMPVPDGSVAAAGLGLGLPAADSRGHYQLLLSGRALADRYRRIYTAALNDRDQGGGSAGHPASRNKKILNKKKLKRKQKSKSKVKTRSKSENLENTVIIPDIKLHSNPSAFNIYCNVRHCVLEWQKKEISLAAASKNSVQSGESDSDEEEESKEPPIKLPKIIEVGLCEVFELIKETRFSHPSLCLRSLQALLNVLQGQQPEGLQSEPPEVLESLFQLLLEITVRSTGMNDSTGQSLTALSCACLFSLVASWGETGRTLQAISAILTNNGSHACQTIQVPTILNSLQRSVQAVLVGKIQIQDWFSNGIKKAALMHKWPLKEISVDEDDQCLLQNDGFFLYLLCKDGLYKIGSGYSGTVRGHIYNSTSRIRNRKEKKSWLGYAQGYLLYRDVNNHSMTAIRISPETLEQDGTVMLPDCHTEGQNILFTDGEYINQIAASRDDGFVVRIFATSTEPVLQQELQLKLARKCLHACGISLFDLEKDLHIISTGFDEESAILGAGREFALMKTANGKIYYTGKYQSLGIKQGGPSAGKWVELPITKSPKIVHFSVGHDGSHALLVAEDGSIFFTGSASKGEDGESTKSRRQSKPYKPKKIIKMEGKIVVYTACNNGSSSVISKDGELYMFGKDAIYSDSSSLVTDLKGHFVTQVAMGKAHTCVLMKNGEVWTFGVNNKGQCGRDTGAMNQGGKGFGVENMATAMDEDLEEELDEKDEKSMMCPPGMHKWKLEQCMVCTVCGDCTGYGASCVSSGRPDRVPGGICGCGSGESGCAVCGCCKACARELDGQEARQRGILDAVKEMIPLDLLLAVPVPGVNIEEHLQLRQEEKRQRVIRRHRLEEGRGPLVFAGPIFMNHREQALARLRSHPAQLKHKRDKHKDGSGERGEKDASKITTYPPGSVRFDCELRAVQVSCGFHHSVVLMENGDVYTFGYGQHGQLGHGDVNSRGCPTLVQALPGPSTQVTAGSNHTAVLLMDGQVFTFGSFSKGQLGRPILDVPYWNAKPAPMPNIGSKYGRKATWIGASGDQTFLRIDEALINSHVLATSEIFASKHIIGLVPASISEPPPFKCLLINKVDGSCKTFNDSEQEDLQGFGVCLDPVYDVIWRFRPNTRELWCYNAVVADARLPSAADMQSRCSILSPELALPTGSRALTTRSHAALHILGCLDTLAAMQDLKMGVASTEEETQAVMKVYSKEDYSVVNRFESHGGGWGYSAHSVEAIRFSADTDILLGGLGLFGGRGEYTAKIKLFELGPDGGDHETDGDLLAETDVLAYDCAAREKYAMMFDEPVLLQAGWWYVAWARVSGPSSDCGSHGQASITTDDGVVFQFKSSKKSNNGTDVNAGQIPQLLYRLPTSDGSASKGKQQTSEPVHILKRSFARTVSVECFESLLSILHWSWTTLVLGVEELRGLKGFQFTATLLDLERLRFVGTCCLRLLRVYTCEIYPVSATGKAVVEETSKLAECIGKTRTLLRKILSEGVDHCMVKLDNDPQGYLSQPLSLLEAVLQECHNTFTACFHSFYPTPALQWACLCDLLNCLDQDIQEANFKTSSSRLLAAVMSALCHTSVKLTSIFPIAYDGEVLLRSIVKQVSTENDSTLVHRFPLLVAHMEKLSQSEENISGMTSFREVLEKMLVIVVLPVRNSLRRENELFSSHLVSNTCGLLASIVSELTASALGSEVDGLNSLHSVKASANRFTKTSQGRSWNTGNGSPDAICFSVDKPGIVVVGFSVYGGGGIHEYELEVLVDDSEHAGDSTHSHRWTSLELVKGTYTTDDSPSDIAEIRLDKVVPLKENVKYAVRLRNYGSRTANGDGGMTTVQCPDGVTFTFSTCSLSSNGTNQTRGQIPQILYYRSEFDGDLQSQLLSKANEEDKNCSRALSVVSTVVRASKDLLHRALAVDADDIPELLSSSSLFSMLLPLIIAYIGPVAAAIPKVAVEVFGLVQQLLPSVAILNQKYAPPAFNPNQSTDSTTGNQPEQGLSACTTSSHYAVIESEHPYKPACVMHYKVTFPECVRWMTIEFDPQCGTAQSEDVLRLLIPVRTVQNSGYGPKLTSVHENLNSWIELKKFSGSSGWPTMVLVLPGNEALFSLETASDYVKDDKASFYGFKCFAIGYEFSPGPDEGVIQLEKELANLGGVCAAALMKKDLALPIGNELEEDLEILEEAALQVCKTHSGILGKGLALSHSPTILEALEGNLPLQIQSNEQSFLDDFIACVPGSSGGRLARWLQPDSYADPQKTSLILNKDDIRCGWPTTITVQTKDQYGDVVHVPNMKVEVKAVPVSQKKMSLQQDQAKKPQRIPGSPAVTAASSNTDMTYGGLASPKLDVSYEPMIVKEARYIAITMMKVYENYSFEELRFASPTPKRPSENMLIRVNNDGTYCANWTPGAIGLYTLHVTIDGIEIDAGLEVKVKDPPKGMIPPGTQLVKPKSEPQPNKVRKFVAKDSAGLRIRSHPSLQSEQIGIVKVNGTITFIDEIHNDDGVWLRLNDETIKKYVPNMNGYTEAWCLSFNQHLGKSLLVPVDESKTNTDDFFKDINSCCPQEATMQEQDMPFLRGGPGMYKVVKTGPSGHNIRSCPNLRGIPIGMLVLGNKVKAVGEVTNSEGTWVQLDQNSMVEFCESDEGEAWSLARDRGGNQYLRHEDEQALLDQNSQTPPPSPFSVQAFNKGASCSAQGFDYGLGNSKGDRGNISTSSKPASTSGKSELSSKHSRSLKPDGRMSRTTADQKKPRGTESLSASESLILKSDAAKLRSDSHSRSLSPNHNTLQTLKSDGRMPSSSRAESPGPGSRLSSPKPKTLPANRSSPSGASSPRSSSPHDKNLPQKSTAPVKTKLDPPRERSKSDSYTLDPDTLRKKKMPLTEPLRGRSTSPKPKSVPKDSTDSPGSENRAPSPHVVQENLHSEVVEVCTSSTLKTNSLTDSTCDDSSEFKSVDEGSNKVHFSIGKAPLKDEQEMRASPKISRKCANRHTRPKKEKSSFLFKGDGSKPLEPAKQAMSPSVAECARAVFASFLWHEGIVHDAMACSSFLKFHPELSKEHAPIRSSLNSQQPTEEKETKLKNRHSLEISSALNMFNIAPHGPDISKMGSINKNKVLSMLKEPPLHEKCEDGKTETTFEMSMHNTMKSKSPLPLTLQHLVAFWEDISLATIKAASQNMIFPSPGSCAVLKKKECEKENKKSKKEKKKKEKAEVRPRGNLFGEMAQLAVGGPEKDTICELCGESHPYPVTYHMRQAHPGCGRYAGGQGYNSIGHFCGGWAGNCGDGGIGGSTWYLVCDRCREKYLREKQAAAREKVKQSRRKPMQVKTPRALPTMEAHQVIKANALFLLSLSSAAEPSILCYHPAKPFQSQLPSVKEGISEDLPVKMPCLYLQTLARHHHENFVGYQDDNLFQDEMRYLRSTSVPAPYISVTPDASPNVFEEPESNMKSMPPSLETSPITDTDLAKRTVFQRSYSVVASEYDKQHSILPARVKAIPRRRVNSGDTEVGSSLLRHPSPELSRLISAHSSLSKGERNFQWPVLAFVIQHHDLEGLEIAMKQALRKSACRVFAMEAFNWLLCNVIQTTSLHDILWHFVASLTPAPVEPEEEEDEENKTSKENSEQEKDTRVCEHPLSDIVIAGEAAHPLPHTFHRLLQTISDLMMSLPSGSSLQQMALRCWSLKFKQSDHQFLHQSNVFHHINNILSKSDDGDSEESFSISIQSGFEAMSQELCIVMCLKDLTSIVDIKTSSRPAMIGSLTDGSTETFWESGDEDKNKTKNITINCVKGINARYVSVHVDNSRDLGNKVTSMTFLTGKAVEDLCRIKQVDLDSRHIGWVTSELPGGDNHIIKIELKGPENTLRVRQVKVLGWKDGESTKIAGQISASVAQQRNCEAETLRVFRLITSQVFGKLISGDAEPTPEQEEKALLSSPEGEEKVYNATSDADLKEHMVGIIFSRSKLTNLQKQVCAHIVQAIRMEATRVREEWEHAISSKENANSQPNDEDASSDAYCFELLSMVLALSGSNVGRQYLAQQLTLLQDLFSLLHTASPRVQRQVTSLLRRVLPEVTPSRLASIIGVKSLPPADISDIIHSTEKGDWNKLGILDMFLGCIAKALTVQLKAKGTTITGTAGTTVGKGVTTVTLPMIFNSSYLRRGESHWWMKGSTPTQISEIIIKLIKDMAAGHLSEAWSRVTKNAIAETIIALTKMEEEFRSPVRCIATTRLWLALASLCVLDQDHVDRLSSGRWMGKDGQQKQMPMCDNHDDGETAAIILCNVCGNLCTDCDRFLHLHRRTKTHQRQVFKEEEEAIKVDLHEGCGRTKLFWLMALADSKTMKAMVEFREHTGKPTTSSSEACRFCGSRSGTELSAVGSVCSDADCQEYAKIACSKTHPCGHPCGGVKNEEHCLPCLHGCDKSATSLKQDADDMCMICFTEALSAAPAIQLDCSHIFHLQCCRRVLENRWLGPRITFGFISCPICKNKINHIVLKDLLDPIKELYEDVRRKALMRLEYEGLHKSEAITTPGVRFYNDPAGYAMNRYAYYVCYKCRKAYFGGEARCDAEAGRGDDYDPRELICGACSDVSRAQMCPKHGTDFLEYKCRYCCSVAVFFCFGTTHFCNACHDDFQRMTSIPKEELPHCPAGPKGKQLEGTECPLHVVHPPTGEEFALGCGVCRNAHTF.

Disordered stretches follow at residues 87 to 127 (DRDQ…RSKS), 172 to 192 (SKNS…SKEP), and 609 to 628 (ASKG…KPYK). A compositionally biased stretch (basic residues) spans 100–124 (SRNKKILNKKKLKRKQKSKSKVKTR). 4 positions are modified to phosphoserine: Ser127, Ser178, Ser181, and Ser183. 5 RCC1 repeats span residues 600–655 (DGSI…VISK), 699–755 (NGEV…MMCP), 907–957 (KRDK…VLME), 958–1008 (NGDV…VLLM), and 1010–1066 (GQVF…LRID). Positions 898–910 (RSHPAQLKHKRDK) are enriched in basic residues. Positions 898–928 (RSHPAQLKHKRDKHKDGSGERGEKDASKITT) are disordered. Positions 911–924 (HKDGSGERGEKDAS) are enriched in basic and acidic residues. The tract at residues 1235 to 1386 (NRFESHGGGW…GQIPQLLYRL (152 aa)) is PHR domain 1. Ser1624 bears the Phosphoserine mark. The segment at 1726-1884 (NRFTKTSQGR…GQIPQILYYR (159 aa)) is PHR domain 2. A disulfide bridge links Cys1748 with Cys1863. Disordered stretches follow at residues 1993 to 2012 (FNPN…QGLS) and 2321 to 2340 (QQDQ…VTAA). Residues 1994 to 2012 (NPNQSTDSTTGNQPEQGLS) show a composition bias toward polar residues. An RAE1 binding region spans residues 2022 to 2550 (VIESEHPYKP…NQHLGKSLLV (529 aa)). One copy of the Filamin repeat lies at 2341–2443 (SSNTDMTYGG…IDAGLEVKVK (103 aa)). Thr2683 is subject to Phosphothreonine. Disordered stretches follow at residues 2709–2931 (LGNS…LHSE), 2943–2963 (TNSL…VDEG), 2979–3020 (EQEM…EPAK), and 3066–3085 (APIR…ETKL). Positions 2718–2733 (NISTSSKPASTSGKSE) are enriched in polar residues. Basic and acidic residues predominate over residues 2742–2760 (LKPDGRMSRTTADQKKPRG). Ser2769 is subject to Phosphoserine. Residues 2775-2785 (DAAKLRSDSHS) show a composition bias toward basic and acidic residues. A compositionally biased stretch (polar residues) spans 2786 to 2810 (RSLSPNHNTLQTLKSDGRMPSSSRA). Residues Ser2787, Ser2789, Ser2833, Ser2839, Ser2869, Ser2871, and Ser2920 each carry the phosphoserine modification. Residues 2828–2843 (PANRSSPSGASSPRSS) show a composition bias toward low complexity. Basic and acidic residues predominate over residues 2860–2871 (TKLDPPRERSKS). Ser2985 is modified (phosphoserine). The span at 2988 to 3001 (ISRKCANRHTRPKK) shows a compositional bias: basic residues. Phosphoserine occurs at positions 3090, 3478, and 3505. Residues 3605–3631 (PVEPEEEEDEENKTSKENSEQEKDTRV) form a disordered region. A compositionally biased stretch (basic and acidic residues) spans 3616–3631 (NKTSKENSEQEKDTRV). The DOC domain maps to 3719 to 3897 (SISIQSGFEA…VAQQRNCEAE (179 aa)). Residues 3915–3934 (SGDAEPTPEQEEKALLSSPE) form a disordered region. Thr3921 carries the phosphothreonine modification. Phosphoserine occurs at positions 3931 and 3932. The Zn(2+) site is built by Cys4428, Cys4431, Cys4446, His4448, His4451, Cys4454, Cys4475, Cys4478, Cys4544, and Cys4547. The RING-type; atypical zinc finger occupies 4428–4479 (CMICFTEALSAAPAIQLDCSHIFHLQCCRRVLENRWLGPRITFGFISCPICK). A tandem cysteine domain region spans residues 4539–4676 (YAYYVCYKCR…LGCGVCRNAH (138 aa)). The active site involves Cys4558. Cys4575, Cys4578, Cys4587, His4590, Cys4599, Cys4602, and Cys4603 together coordinate Zn(2+). Residue Cys4610 is part of the active site. 7 residues coordinate Zn(2+): Cys4617, Cys4620, Cys4638, Cys4652, His4658, Cys4669, and Cys4672.

It belongs to the RING-Cys relay (RCR) family. As to quaternary structure, interacts with MYC. Interacts with TSC2 (tuberin) when TSC2 is in complex with TSC1 (hamartin). Interacts with FBXO45. Interacts with RAE1. Interacts with CPNE1 (via VWFA domain) and CPNE4 (via VWFA domain). Interacts with (sumoylated) RANGAP1; interaction with sumoylated RANGAP1 inhibits E3 ubiquitin-protein ligase activity and promotes MYCBP2 translocation to the nucleus. Interacts with RAN. Interacts with ATP13A2; the interaction inhibits the ubiquitination of TSC2 by MYCBP2. Interacts with USP11. Autoubiquitinated. As to expression, expressed in all tissues examined, expression is exceptionally abundant in brain and thymus. Colocalizes with TSC1 and TSC2 along the neurites and in the growth cones. Highly expressed in peripheral and central neurons. Colocalized with TSC1 in one of the filopodial extensions at the tip of a growth cone.

It localises to the nucleus. It is found in the cell projection. The protein localises to the axon. Its subcellular location is the cytoplasm. The protein resides in the cytoskeleton. It carries out the reaction [E2 ubiquitin-conjugating enzyme]-S-ubiquitinyl-L-cysteine + [acceptor protein]-L-threonine = [E2 ubiquitin-conjugating enzyme]-L-cysteine + [acceptor protein]-3-O-ubiquitinyl-L-threonine.. It functions in the pathway protein modification; protein ubiquitination. Atypical E3 ubiquitin-protein ligase which specifically mediates ubiquitination of threonine and serine residues on target proteins, instead of ubiquitinating lysine residues. Shows esterification activity towards both threonine and serine, with a preference for threonine, and acts via two essential catalytic cysteine residues that relay ubiquitin to its substrate via thioester intermediates. Interacts with the E2 enzymes UBE2D1, UBE2D3, UBE2E1 and UBE2L3. Plays a key role in neural development, probably by mediating ubiquitination of threonine residues on target proteins. Involved in different processes such as regulation of neurite outgrowth, synaptic growth, synaptogenesis and axon degeneration. Required for the formation of major central nervous system axon tracts. Required for proper axon growth by regulating axon navigation and axon branching: acts by regulating the subcellular location and stability of MAP3K12/DLK. Required for proper localization of retinogeniculate projections but not for eye-specific segregation. Regulates axon guidance in the olfactory system. Involved in Wallerian axon degeneration, an evolutionarily conserved process that drives the loss of damaged axons: acts by promoting destabilization of NMNAT2, probably via ubiquitination of NMNAT2. Catalyzes ubiquitination of threonine and/or serine residues on NMNAT2, consequences of threonine and/or serine ubiquitination are however unknown. Regulates the internalization of TRPV1 in peripheral sensory neurons. Mediates ubiquitination and subsequent proteasomal degradation of TSC2/tuberin. Independently of the E3 ubiquitin-protein ligase activity, also acts as a guanosine exchange factor (GEF) for RAN in neurons of dorsal root ganglia. May function as a facilitator or regulator of transcriptional activation by MYC. Acts in concert with HUWE1 to regulate the circadian clock gene expression by promoting the lithium-induced ubiquination and degradation of NR1D1. The protein is E3 ubiquitin-protein ligase MYCBP2 of Homo sapiens (Human).